The primary structure comprises 181 residues: MIVVTGMPGAGKDEFVKVARSLGFIDLHMGNTVREFAKNAGIPEIDHEIGNFATSERKKYGMDIWAVRTAQKITDDGRTVIDGLRNYEELQYFSKFSENPYVVAIFASRKDRFSRILKRDRPDDIRTMEELIERDTRELSWGIGNVIALADYMIVNDDTLETFHARCRKLLTEKFSISNKI.

6-13 (GMPGAGKD) serves as a coordination point for ATP.

Belongs to the UPF0200 family.

The protein is UPF0200 protein Ta0179 of Thermoplasma acidophilum (strain ATCC 25905 / DSM 1728 / JCM 9062 / NBRC 15155 / AMRC-C165).